We begin with the raw amino-acid sequence, 466 residues long: Zinc finger protein NUTCRACKER (466 aa).

Over residues 1-23 the composition is skewed to polar residues; it reads MTSEVLQTISSGSGFAQPQSSST. Residues 1–29 form a disordered region; the sequence is MTSEVLQTISSGSGFAQPQSSSTLDHDES. Serine 56 bears the Phosphoserine mark. Residues 66–88 form a C2H2-type 1 zinc finger; sequence FLCEVCGKGFQRDQNLQLHRRGH. At threonine 98 the chain carries Phosphothreonine; by KIN10. A C2H2-type 2 zinc finger spans residues 107-137; the sequence is YVCPEKTCVHHHSSRALGDLTGIKKHFCRKH. The short motif at 134–141 is the Nuclear localization signal element; sequence CRKHGEKK. The C2H2-type 2; degenerate zinc-finger motif lies at 142–165; the sequence is WTCEKCAKRYAVQSDWKAHSKTCG. Residues cysteine 144, cysteine 147, histidine 160, cysteine 164, cysteine 171, and cysteine 173 each contribute to the Zn(2+) site. The CCHC-type 2; atypical zinc finger occupies 169-192; it reads YRCDCGTIFSRRDSFITHRAFCDA. 2 positions are modified to phosphoserine; by KIN10: serine 178 and serine 182. The interval 179–191 is SHR-binding; the sequence is RRDSFITHRAFCD. The Zn(2+) site is built by histidine 186 and cysteine 190.

Interacts with AKIN10. In terms of processing, inhibition of transcription factor activity by KIN10-mediated phosphorylation at Thr-98, Ser-178 and Ser-182 under sugar deprivation conditions, thus delaying flowering. As to expression, highly expressed in vegetative organs and at lower levels in flowers and siliques. Expressed predominantly in roots. In roots, present in cortex, endodermis, and pericycle layer.

Its subcellular location is the nucleus. In terms of biological role, transcription activator that binds to the DNA sequence 5'-CTTTTGTCC-3'. Regulates photoperiodic flowering by modulating sugar transport and metabolism. Regulates SUS1 and SUS4. Transcription factor that regulates tissue boundaries and asymmetric cell division. Contributes to the sequestration of 'SHORT-ROOT' to the nucleus. The protein is Zinc finger protein NUTCRACKER of Arabidopsis thaliana (Mouse-ear cress).